Here is a 214-residue protein sequence, read N- to C-terminus: uncharacterized protein (214 aa).

The N-terminal stretch at 1–24 (MKIWIKAICITSFVIQMSACSSSA) is a signal peptide. Positions 64 to 197 (ETVKGKVLHI…KEAKAGVWSI (134 aa)) constitute a TNase-like domain. Active-site residues include Arg-91, Glu-99, and Arg-142.

This is an uncharacterized protein from Bacillus anthracis.